A 148-amino-acid chain; its full sequence is Arginine repressor (148 aa).

This sequence belongs to the ArgR family.

It is found in the cytoplasm. Its pathway is amino-acid biosynthesis; L-arginine biosynthesis [regulation]. Regulates arginine biosynthesis genes. This chain is Arginine repressor, found in Koribacter versatilis (strain Ellin345).